The primary structure comprises 130 residues: Large ribosomal subunit protein bL19 (130 aa).

Belongs to the bacterial ribosomal protein bL19 family.

Its function is as follows. This protein is located at the 30S-50S ribosomal subunit interface and may play a role in the structure and function of the aminoacyl-tRNA binding site. The sequence is that of Large ribosomal subunit protein bL19 from Burkholderia orbicola (strain MC0-3).